A 160-amino-acid chain; its full sequence is Zinc finger A20 and AN1 domain-containing stress-associated protein 5 (160 aa).

The A20-type zinc-finger motif lies at 20-54 (TTTTTLCTNNCGVTANPATNNMCQKCFNASLVSAA). Residues Cys-26, Cys-30, Cys-42, Cys-45, Cys-101, Cys-104, Cys-115, Cys-117, Cys-122, His-125, His-131, and Cys-133 each contribute to the Zn(2+) site. Residues 95-141 (QQIVNRCSGCRKKVGLTGFRCRCGELFCSEHRYSDRHDCSYDYKTAG) form an AN1-type zinc finger.

May be involved in environmental stress response. The polypeptide is Zinc finger A20 and AN1 domain-containing stress-associated protein 5 (SAP5) (Arabidopsis thaliana (Mouse-ear cress)).